The chain runs to 391 residues: BRCA1-A complex subunit Abraxas 1 (391 aa).

Positions 8-156 (VRISGFVLSS…THRLEFSAFI (149 aa)) constitute an MPN domain. A coiled-coil region spans residues 223–261 (LLAEMQKVCVEVEKSERTVEKLQEDIAQLKEAIGKQKTH). The disordered stretch occupies residues 354–391 (QRLKRKRKTREVSESASESGSDTEIEMNGQSGSNSPVF). Over residues 367 to 391 (ESASESGSDTEIEMNGQSGSNSPVF) the composition is skewed to polar residues. S388 is subject to Phosphoserine. Residues 388 to 391 (SPVF) carry the pSXXF motif motif.

This sequence belongs to the FAM175 family. Abraxas subfamily. As to quaternary structure, component of the ARISC complex. Component of the BRCA1-A complex. Homodimer. In terms of processing, phosphorylation of Ser-388 of the pSXXF motif by ATM or ATR constitutes a specific recognition motif for the BRCT domain of BRCA1.

The protein localises to the nucleus. Involved in DNA damage response and double-strand break (DSB) repair. Component of the BRCA1-A complex, acting as a central scaffold protein that assembles the various components of the complex. The BRCA1-A complex specifically recognizes 'Lys-63'-linked ubiquitinated histones H2A and H2AX at DNA lesion sites. This complex also possesses deubiquitinase activity that specifically removes 'Lys-63'-linked ubiquitin on histones H2A and H2AX. In Danio rerio (Zebrafish), this protein is BRCA1-A complex subunit Abraxas 1.